Reading from the N-terminus, the 1047-residue chain is Atrial natriuretic peptide receptor 2 (1047 aa).

The first 16 residues, 1-16 (MALPSLLLVVAALAGG), serve as a signal peptide directing secretion. Topologically, residues 17-458 (VRPPGARNLT…DKTPLSTLAI (442 aa)) are extracellular. N24 and N35 each carry an N-linked (GlcNAc...) asparagine glycan. A disulfide bridge links C75 with C101. 5 N-linked (GlcNAc...) asparagine glycosylation sites follow: N161, N195, N244, N277, and N349. Residues 459-478 (VALGTGITFIMFGVSSFLIF) form a helical membrane-spanning segment. Topologically, residues 479 to 1047 (RKLMLEKELA…GERKGPPGLL (569 aa)) are cytoplasmic. Position 513 is a phosphoserine (S513). Residues 513–786 (SRLTLSLRGS…PDFGQIKGFI (274 aa)) enclose the Protein kinase domain. Phosphothreonine is present on T516. Residues S518, S522, S523, and S526 each carry the phosphoserine modification. The residue at position 529 (T529) is a Phosphothreonine. Residues 861-991 (TIYFSDIVGF…DTVNTASRME (131 aa)) form the Guanylate cyclase domain.

Belongs to the adenylyl cyclase class-4/guanylyl cyclase family. Phosphorylated. Phosphorylation of the protein kinase-like domain is required for full activation by CNP. Post-translationally, glycosylated.

The protein localises to the cell membrane. The enzyme catalyses GTP = 3',5'-cyclic GMP + diphosphate. Its function is as follows. Receptor for the C-type natriuretic peptide NPPC/CNP hormone. Has guanylate cyclase activity upon binding of its ligand. May play a role in the regulation of skeletal growth. This Rattus norvegicus (Rat) protein is Atrial natriuretic peptide receptor 2 (Npr2).